The following is a 679-amino-acid chain: Recombination repair protein 1 (679 aa).

A disordered region spans residues 1–407 (MPRVKAVKKQ…TKKAKKAETK (407 aa)). The span at 45–55 (AKGKPRARKAT) shows a compositional bias: basic residues. Positions 106–116 (ATAEAEPEPKV) are enriched in basic and acidic residues. 2 positions are modified to phosphothreonine: T133 and T140. S142 carries the post-translational modification Phosphoserine. 2 stretches are compositionally biased toward basic and acidic residues: residues 179-189 (EPPKQRARKEA) and 203-214 (SKEKVQKAETAA). S258 is subject to Phosphoserine. The segment covering 312-347 (KKEGKEPAPGKKQKKSADKENGVVEEEAKPSTETKP) has biased composition (basic and acidic residues). The tract at residues 428-679 (KICSWNVAGL…HCPITIFFNI (252 aa)) is AP endonuclease. A Mg(2+)-binding site is contributed by E461. Y533 is a catalytic residue. Mg(2+)-binding residues include D572, N574, and D669. Catalysis depends on D572, which acts as the Proton donor/acceptor.

The protein belongs to the DNA repair enzymes AP/ExoA family. As to quaternary structure, interacts with the zeta DNA polymerase complex; interacts (via the N-terminus) with the accessory subunit PolZ2/Rev7 and also interacts with the catalytic component PolZ1, however the interaction with PolZ1 is likely via PolZ2. The cofactor is Mg(2+). Requires Mn(2+) as cofactor.

It localises to the nucleus. The catalysed reaction is Exonucleolytic cleavage in the 3'- to 5'-direction to yield nucleoside 5'-phosphates.. Plays a role in the cellular response to oxidative stress by promoting DNA repair mechanisms such as base excision repair and possibly homologous recombination repair. Functions as an apurinic/apyrimidinic (AP) endodeoxyribonuclease in the DNA base excision repair (BER) pathway of DNA lesions induced by oxidative and alkylating agents. Likely to initiate repair of AP sites in DNA by catalyzing hydrolytic incision of the phosphodiester backbone immediately adjacent to the damage, generating a single-strand break with 5'-deoxyribose phosphate and 3'-hydroxyl ends. Has a 3'-5' exoribonuclease activity on mismatched deoxyribonucleotides at the 3' termini of nicked or gapped DNA molecules during short-patch BER. Has apurinic endonuclease and double-stranded DNA 3'-exonuclease activities and carries out single-stranded DNA renaturation in a Mg(2+)-dependent manner. Activity is more efficient in purine-rich regions of dsDNA than in pyrimidine-rich regions. The sequence is that of Recombination repair protein 1 from Drosophila melanogaster (Fruit fly).